The sequence spans 396 residues: MIQLLALKRDLKVEIREKFSIIEKRIGDKDVLLKEVCNEVVILSTCNRIEIYFNSEKNRKQIIEEIFSKMGWNINFLENFFYCKGDEAINHLMEVACGFDSLILGEDQILGQIKAAYDTALKNKTSGSELKKLFQLVITCGKEFRSISMLNRIPVSSASIAVNKARQENLRRFMVFGFGDVGSLVCKYILSSDFDVLYIVVRNKAAVSIKDKRIKVLSFNEKNSYYDDVECMISCTSAPHPVIWEKELPYRKFTIFDLAVPRDVEETVYGRNNIDIYDIDQISMIDNNNRKKRKEIMMANRHIMSKYIVEFYDWQKVQEIVPDIIKLKLYGESVNKRRYETFKNKKATKDNDMLVNMLIKSTSNVYINRAIEVLKEEQLKGRGEDCLRILRRIFQK.

Substrate-binding positions include 45 to 48 (TCNR), Ser101, 106 to 108 (EDQ), and Gln112. The Nucleophile role is filled by Cys46. 177–182 (GFGDVG) provides a ligand contact to NADP(+).

The protein belongs to the glutamyl-tRNA reductase family. As to quaternary structure, homodimer.

It catalyses the reaction (S)-4-amino-5-oxopentanoate + tRNA(Glu) + NADP(+) = L-glutamyl-tRNA(Glu) + NADPH + H(+). Its pathway is porphyrin-containing compound metabolism; protoporphyrin-IX biosynthesis; 5-aminolevulinate from L-glutamyl-tRNA(Glu): step 1/2. In terms of biological role, catalyzes the NADPH-dependent reduction of glutamyl-tRNA(Glu) to glutamate 1-semialdehyde (GSA). This chain is Glutamyl-tRNA reductase, found in Clostridium acetobutylicum (strain ATCC 824 / DSM 792 / JCM 1419 / IAM 19013 / LMG 5710 / NBRC 13948 / NRRL B-527 / VKM B-1787 / 2291 / W).